Consider the following 100-residue polypeptide: MQLTPREKDKLLISMAAEVARKRLARGVKLNHPEAIALITDAVVEGARDGRSVADMMEAGAQVITRDQCMEGVPEMIHDVQVEATFPDGTKLVTVHNPIR.

The protein belongs to the urease gamma subunit family. Heterotrimer of UreA (gamma), UreB (beta) and UreC (alpha) subunits. Three heterotrimers associate to form the active enzyme.

The protein localises to the cytoplasm. It catalyses the reaction urea + 2 H2O + H(+) = hydrogencarbonate + 2 NH4(+). The protein operates within nitrogen metabolism; urea degradation; CO(2) and NH(3) from urea (urease route): step 1/1. The sequence is that of Urease subunit gamma from Roseobacter denitrificans (strain ATCC 33942 / OCh 114) (Erythrobacter sp. (strain OCh 114)).